Here is a 71-residue protein sequence, read N- to C-terminus: UPF0346 protein Bcer98_1690 (71 aa).

This sequence belongs to the UPF0346 family.

The polypeptide is UPF0346 protein Bcer98_1690 (Bacillus cytotoxicus (strain DSM 22905 / CIP 110041 / 391-98 / NVH 391-98)).